The primary structure comprises 176 residues: ATP-dependent protease subunit HslV (176 aa).

Thr-5 is a catalytic residue. The Na(+) site is built by Ala-161, Cys-164, and Thr-167.

The protein belongs to the peptidase T1B family. HslV subfamily. As to quaternary structure, a double ring-shaped homohexamer of HslV is capped on each side by a ring-shaped HslU homohexamer. The assembly of the HslU/HslV complex is dependent on binding of ATP.

The protein resides in the cytoplasm. It carries out the reaction ATP-dependent cleavage of peptide bonds with broad specificity.. With respect to regulation, allosterically activated by HslU binding. Functionally, protease subunit of a proteasome-like degradation complex believed to be a general protein degrading machinery. The chain is ATP-dependent protease subunit HslV from Pelotomaculum thermopropionicum (strain DSM 13744 / JCM 10971 / SI).